A 263-amino-acid polypeptide reads, in one-letter code: Phosphatidylglycerol--prolipoprotein diacylglyceryl transferase (263 aa).

Transmembrane regions (helical) follow at residues 6 to 26 (VIFS…VLGI), 50 to 70 (LLTA…VLIY), 85 to 105 (TWEG…AVII), and 112 to 132 (IPIF…LFLG). Arg-133 is an a 1,2-diacyl-sn-glycero-3-phospho-(1'-sn-glycerol) binding site. Transmembrane regions (helical) follow at residues 169–189 (LYEA…LFFL), 197–217 (GALT…VEFF), and 233–253 (MGQL…LGAL).

Belongs to the Lgt family.

Its subcellular location is the cell membrane. The enzyme catalyses L-cysteinyl-[prolipoprotein] + a 1,2-diacyl-sn-glycero-3-phospho-(1'-sn-glycerol) = an S-1,2-diacyl-sn-glyceryl-L-cysteinyl-[prolipoprotein] + sn-glycerol 1-phosphate + H(+). Its pathway is protein modification; lipoprotein biosynthesis (diacylglyceryl transfer). Functionally, catalyzes the transfer of the diacylglyceryl group from phosphatidylglycerol to the sulfhydryl group of the N-terminal cysteine of a prolipoprotein, the first step in the formation of mature lipoproteins. This is Phosphatidylglycerol--prolipoprotein diacylglyceryl transferase from Wolbachia sp. subsp. Drosophila simulans (strain wRi).